We begin with the raw amino-acid sequence, 96 residues long: UPF0235 protein KPK_0722 (96 aa).

This sequence belongs to the UPF0235 family.

The protein is UPF0235 protein KPK_0722 of Klebsiella pneumoniae (strain 342).